Reading from the N-terminus, the 352-residue chain is Inhibin beta C chain (352 aa).

Residues 1–18 (MTSSLLLAFLLLAPTTVA) form the signal peptide. A propeptide spanning residues 19-236 (TPRAGGQCPA…VGGKHQIHRR (218 aa)) is cleaved from the precursor. N-linked (GlcNAc...) asparagine glycosylation is found at asparagine 110, asparagine 143, and asparagine 161. 4 disulfide bridges follow: cysteine 240-cysteine 248, cysteine 247-cysteine 317, cysteine 276-cysteine 349, and cysteine 280-cysteine 351.

The protein belongs to the TGF-beta family. In terms of assembly, homodimeric or heterodimeric through association with alpha and beta subunits, linked by one or more disulfide bonds. Inhibins are heterodimers of one alpha and one beta subunit. Activins are homo- or heterodimers of beta subunits only. In terms of tissue distribution, expressed in benign prostatic hyperplasia.

The protein localises to the secreted. Functionally, inhibins and activins inhibit and activate, respectively, the secretion of follitropin by the pituitary gland. Inhibins/activins are involved in regulating a number of diverse functions such as hypothalamic and pituitary hormone secretion, gonadal hormone secretion, germ cell development and maturation, erythroid differentiation, insulin secretion, nerve cell survival, embryonic axial development or bone growth, depending on their subunit composition. Inhibins appear to oppose the functions of activins. This Homo sapiens (Human) protein is Inhibin beta C chain (INHBC).